A 138-amino-acid chain; its full sequence is Large ribosomal subunit protein uL16 (138 aa).

The segment covering 1–17 has biased composition (basic residues); that stretch reads MLIPRKVKHRKQHHPRQ. A disordered region spans residues 1–23; that stretch reads MLIPRKVKHRKQHHPRQRGIASG.

It belongs to the universal ribosomal protein uL16 family. Part of the 50S ribosomal subunit.

Its function is as follows. Binds 23S rRNA and is also seen to make contacts with the A and possibly P site tRNAs. This is Large ribosomal subunit protein uL16 from Mycobacterium sp. (strain JLS).